Reading from the N-terminus, the 209-residue chain is Ribosomal RNA large subunit methyltransferase E (209 aa).

Residues glycine 63, tryptophan 65, aspartate 83, aspartate 99, and aspartate 124 each contribute to the S-adenosyl-L-methionine site. Lysine 164 serves as the catalytic Proton acceptor.

Belongs to the class I-like SAM-binding methyltransferase superfamily. RNA methyltransferase RlmE family.

It localises to the cytoplasm. The catalysed reaction is uridine(2552) in 23S rRNA + S-adenosyl-L-methionine = 2'-O-methyluridine(2552) in 23S rRNA + S-adenosyl-L-homocysteine + H(+). Functionally, specifically methylates the uridine in position 2552 of 23S rRNA at the 2'-O position of the ribose in the fully assembled 50S ribosomal subunit. This is Ribosomal RNA large subunit methyltransferase E from Vibrio atlanticus (strain LGP32) (Vibrio splendidus (strain Mel32)).